The sequence spans 522 residues: Target of rapamycin complex 2 subunit MAPKAP1 (522 aa).

N-acetylalanine is present on Ala2. The segment at Ala2 to His184 is interaction with MAP3K2. The interaction with NBN stretch occupies residues Ala2–Lys267. Residues Leu38–Gly59 form a disordered region. Position 86 is a phosphothreonine (Thr86). Ser128, Ser186, Ser315, and Ser356 each carry phosphoserine. The region spanning Gln139 to Lys267 is the CRIM domain. Residues Leu279–Arg353 are SIN1-type RBD. One can recognise an SIN1-type PH domain in the interval His382–Glu487. Arg393 contacts a 1,2-diacyl-sn-glycero-3-phospho-(1D-myo-inositol-3,4,5-trisphosphate). At Thr398 the chain carries Phosphothreonine. Residues Lys428 and Lys464 each contribute to the a 1,2-diacyl-sn-glycero-3-phospho-(1D-myo-inositol-3,4,5-trisphosphate) site. Residues Phe468 to Gln522 are interaction with ATF2. Ser510 bears the Phosphoserine mark.

This sequence belongs to the SIN1 family. Component of the mechanistic target of rapamycin complex 2 (mTORC2), consisting in two heterotretramers composed of MTOR, MLST8, RICTOR and MAPKAP1/SIN1. The mTORC2 core complex associates with PRR5/PROTOR1 and/or PRR5L/PROTOR2. Contrary to mTORC1, mTORC2 does not bind to and is not sensitive to FKBP12-rapamycin. Interacts with MAP3K2. Interacts with ATF2. Interacts with MAPK8. Interacts with GTP-bound HRAS and KRAS; inhibiting their activity. Interacts with IFNAR2. Phosphorylation at Ser-128 by PKC promotes relocalization to the perinuclear region, where the mTORC2 complex specifically mediates phosphorylation of SGK1. Phosphorylated at Thr-86 by AKT1 or RPS6KB1 in the presence of growth factors; the effect of this phosphorylation is however unclear. According to two studies, phosphorylation at Thr-86 by AKT1 is part of a positive feedback loop that increases mTORC2 activation. According to another study, phosphorylation at Thr-86 and Thr-398 by RPS6KB1 promotes dissociation from the mTORC2 complex, leading to inhibit mTORC2 signaling.

The protein resides in the cell membrane. The protein localises to the endoplasmic reticulum membrane. It is found in the early endosome membrane. Its subcellular location is the late endosome membrane. It localises to the lysosome membrane. The protein resides in the golgi apparatus membrane. The protein localises to the mitochondrion outer membrane. It is found in the cytoplasm. Its subcellular location is the perinuclear region. It localises to the nucleus. With respect to regulation, phosphatidylinositol 3,4,5-trisphosphate (PI(3,4,5)P3) promotes MTOR activation by relieving MAPKAP1/SIN1-mediated inhibition of MTOR that takes place in absence of PI(3,4,5)P3. Its function is as follows. Component of the mechanistic target of rapamycin complex 2 (mTORC2), which transduces signals from growth factors to pathways involved in proliferation, cytoskeletal organization, lipogenesis and anabolic output. In response to growth factors, mTORC2 phosphorylates and activates AGC protein kinase family members, including AKT (AKT1, AKT2 and AKT3), PKC (PRKCA, PRKCB and PRKCE) and SGK1. In contrast to mTORC1, mTORC2 is nutrient-insensitive. Within the mTORC2 complex, MAPKAP1/SIN1 acts as a substrate adapter which recognizes and binds AGC protein kinase family members for phosphorylation by MTOR. mTORC2 plays a critical role in AKT1 activation by mediating phosphorylation of different sites depending on the context, such as 'Thr-450', 'Ser-473', 'Ser-477' or 'Thr-479', facilitating the phosphorylation of the activation loop of AKT1 on 'Thr-308' by PDPK1/PDK1 which is a prerequisite for full activation. mTORC2 catalyzes the phosphorylation of SGK1 at 'Ser-422' and of PRKCA on 'Ser-657'. The mTORC2 complex also phosphorylates various proteins involved in insulin signaling, such as FBXW8 and IGF2BP1. mTORC2 acts upstream of Rho GTPases to regulate the actin cytoskeleton, probably by activating one or more Rho-type guanine nucleotide exchange factors. mTORC2 promotes the serum-induced formation of stress-fibers or F-actin. MAPKAP1 inhibits MAP3K2 by preventing its dimerization and autophosphorylation. Inhibits HRAS and KRAS independently of mTORC2 complex. Enhances osmotic stress-induced phosphorylation of ATF2 and ATF2-mediated transcription. Involved in ciliogenesis, regulates cilia length through its interaction with CCDC28B independently of mTORC2 complex. This Rattus norvegicus (Rat) protein is Target of rapamycin complex 2 subunit MAPKAP1.